The sequence spans 181 residues: ATP-dependent protease subunit HslV (181 aa).

Residue T5 is part of the active site. The Na(+) site is built by A161, C164, and T167.

The protein belongs to the peptidase T1B family. HslV subfamily. In terms of assembly, a double ring-shaped homohexamer of HslV is capped on each side by a ring-shaped HslU homohexamer. The assembly of the HslU/HslV complex is dependent on binding of ATP.

It localises to the cytoplasm. The enzyme catalyses ATP-dependent cleavage of peptide bonds with broad specificity.. Allosterically activated by HslU binding. Its function is as follows. Protease subunit of a proteasome-like degradation complex believed to be a general protein degrading machinery. The protein is ATP-dependent protease subunit HslV of Sulfurimonas denitrificans (strain ATCC 33889 / DSM 1251) (Thiomicrospira denitrificans (strain ATCC 33889 / DSM 1251)).